Reading from the N-terminus, the 397-residue chain is L-asparaginase-like protein GM15681 (397 aa).

An N-terminal signal peptide occupies residues 1–22 (MLAQSCCLRLLILLLLFTSICS). Intrachain disulfides connect cysteine 90/cysteine 95, cysteine 189/cysteine 205, and cysteine 344/cysteine 371.

It belongs to the Ntn-hydrolase family.

The sequence is that of L-asparaginase-like protein GM15681 from Drosophila sechellia (Fruit fly).